The primary structure comprises 238 residues: 2,3-bisphosphoglycerate-dependent phosphoglycerate mutase (238 aa).

Substrate-binding positions include 8–15, 21–22, Arg60, 86–89, Lys97, 113–114, and 182–183; these read RHGQSEWN, TG, ERHY, RR, and GN. His9 serves as the catalytic Tele-phosphohistidine intermediate. The Proton donor/acceptor role is filled by Glu86.

It belongs to the phosphoglycerate mutase family. BPG-dependent PGAM subfamily. As to quaternary structure, homodimer.

It catalyses the reaction (2R)-2-phosphoglycerate = (2R)-3-phosphoglycerate. Its pathway is carbohydrate degradation; glycolysis; pyruvate from D-glyceraldehyde 3-phosphate: step 3/5. Catalyzes the interconversion of 2-phosphoglycerate and 3-phosphoglycerate. The protein is 2,3-bisphosphoglycerate-dependent phosphoglycerate mutase of Pelagibacter ubique (strain HTCC1062).